The chain runs to 229 residues: Prolactin (229 aa).

Positions 1-30 are cleaved as a signal peptide; that stretch reads MDKKGWSLKGSLLPLLLLVSDLLLCQSVAS. Cys-34 and Cys-41 are oxidised to a cystine. 3 positions are modified to phosphoserine: Ser-56, Ser-64, and Ser-120. Disulfide bonds link Cys-88-Cys-204 and Cys-221-Cys-229.

The protein belongs to the somatotropin/prolactin family. Interacts with PRLR.

Its subcellular location is the secreted. Functionally, prolactin acts primarily on the mammary gland by promoting lactation. The sequence is that of Prolactin (PRL) from Ailuropoda melanoleuca (Giant panda).